Here is a 115-residue protein sequence, read N- to C-terminus: Hydrogenase maturation factor HypA (115 aa).

Histidine 2 lines the Ni(2+) pocket. Residues cysteine 73, cysteine 76, cysteine 89, and cysteine 92 each contribute to the Zn(2+) site.

This sequence belongs to the HypA/HybF family.

Functionally, involved in the maturation of [NiFe] hydrogenases. Required for nickel insertion into the metal center of the hydrogenase. The sequence is that of Hydrogenase maturation factor HypA from Aquifex aeolicus (strain VF5).